Here is a 715-residue protein sequence, read N- to C-terminus: Forkhead box protein P2 (715 aa).

Positions 1–28 (MMQESATETISNSSMNQNGMSTLSSQLD) are enriched in polar residues. 2 disordered regions span residues 1-46 (MMQE…EVST) and 281-339 (DNGI…TGAS). Residues 292 to 305 (TTNNSSSTTSSNTS) are compositionally biased toward low complexity. Over residues 326–337 (ARRDSSSHEETG) the composition is skewed to basic and acidic residues. A C2H2-type zinc finger spans residues 346–371 (GVCKWPGCESICEDFGQFLKHLNNEH). The segment at 388–409 (VQQLEIQLSKERERLQAMMTHL) is leucine-zipper. Residues 422-426 (PLNLV) form a CTBP1-binding region. The segment covering 438 to 459 (TSPQSLPQTPTTPTAPVTPITQ) has biased composition (low complexity). A disordered region spans residues 438–465 (TSPQSLPQTPTTPTAPVTPITQGPSVIT). A DNA-binding region (fork-head) is located at residues 504 to 594 (RPPFTYATLI…SQKITGSPTL (91 aa)). Disordered stretches follow at residues 649 to 668 (LDHI…QPHI) and 678 to 715 (VIAE…EDLE). A compositionally biased stretch (acidic residues) spans 699 to 715 (LEDDREIEEEPLSEDLE).

In terms of assembly, forms homodimers and heterodimers with FOXP1 and FOXP4. Dimerization is required for DNA-binding. Interacts with CTBP1. Interacts with FOXP1. Isoform 1 and isoform 3 interact with TBR1. Interacts with ZMYM2. In terms of tissue distribution, isoform 1 and isoform 6 are expressed in adult and fetal brain, caudate nucleus and lung.

It localises to the nucleus. Transcriptional repressor that may play a role in the specification and differentiation of lung epithelium. May also play a role in developing neural, gastrointestinal and cardiovascular tissues. Can act with CTBP1 to synergistically repress transcription but CTPBP1 is not essential. Plays a role in synapse formation by regulating SRPX2 levels. Involved in neural mechanisms mediating the development of speech and language. This Homo sapiens (Human) protein is Forkhead box protein P2 (FOXP2).